A 155-amino-acid chain; its full sequence is NADPH-dependent 7-cyano-7-deazaguanine reductase (155 aa).

Catalysis depends on Cys52, which acts as the Thioimide intermediate. Asp59 serves as the catalytic Proton donor. Substrate is bound by residues Val74 to Ser76 and His93 to Glu94.

This sequence belongs to the GTP cyclohydrolase I family. QueF type 1 subfamily.

It is found in the cytoplasm. The catalysed reaction is 7-aminomethyl-7-carbaguanine + 2 NADP(+) = 7-cyano-7-deazaguanine + 2 NADPH + 3 H(+). The protein operates within tRNA modification; tRNA-queuosine biosynthesis. Catalyzes the NADPH-dependent reduction of 7-cyano-7-deazaguanine (preQ0) to 7-aminomethyl-7-deazaguanine (preQ1). In Syntrophobacter fumaroxidans (strain DSM 10017 / MPOB), this protein is NADPH-dependent 7-cyano-7-deazaguanine reductase.